A 1902-amino-acid polypeptide reads, in one-letter code: PII-type proteinase (1902 aa).

The first 33 residues, 1 to 33 (MQRKKKGLSILLAGTVALGALAVLPVGEIQAKA), serve as a signal peptide directing secretion. The propeptide occupies 34-187 (AISQQTKGSS…VTLAKVYYPT (154 aa)). The 507-residue stretch at 191–697 (ANSMANVQAV…AGLVDVKAAI (507 aa)) folds into the Peptidase S8 domain. Active-site charge relay system residues include Asp-217, His-281, and Ser-620. Positions 1796–1874 (GKGDGTTGTS…GALPKTGETT (79 aa)) are disordered. Residues 1797–1812 (KGDGTTGTSDKGGGQG) are compositionally biased toward gly residues. Residues 1830–1843 (SQPSSGGNIPTNPA) show a composition bias toward polar residues. The LPXTG sorting signal signature appears at 1867-1871 (LPKTG). Position 1870 is a pentaglycyl murein peptidoglycan amidated threonine (Thr-1870). A propeptide spans 1871–1902 (GETTERPAFGFLGVIVVSLMGVLGLKRKQREE) (removed by sortase).

This sequence belongs to the peptidase S8 family.

The protein resides in the secreted. It is found in the cell wall. It carries out the reaction Endopeptidase activity with very broad specificity, although some subsite preference have been noted, e.g. large hydrophobic residues in the P1 and P4 positions, and Pro in the P2 position. Best known for its action on caseins, although it has been shown to hydrolyze hemoglobin and oxidized insulin B-chain.. Functionally, protease which breaks down milk proteins during the growth of the bacteria on milk. This Lactococcus lactis subsp. cremoris (Streptococcus cremoris) protein is PII-type proteinase (prt).